The sequence spans 498 residues: U4/U6 small nuclear ribonucleoprotein Prp31 (498 aa).

Positions 1–24 are disordered; it reads MSLADELLADLEEAAEEEEENLID. Residues 7 to 24 are compositionally biased toward acidic residues; it reads LLADLEEAAEEEEENLID. Coiled-coil stretches lie at residues 84 to 119 and 180 to 214; these read EAAP…KYSK and DEEL…MSFI. In terms of domain architecture, Nop spans 214 to 332; that stretch reads IAPNLSIIVG…IERKFDKWQE (119 aa). The segment at 333–356 is disordered; sequence PPPVKQVKPLPAPLDGQRKKRGGR. Residues 350 to 363 carry the Nuclear localization signal (NLS) motif; it reads RKKRGGRRYRKMKE.

It belongs to the PRP31 family. Identified in the spliceosome B complex. Component of the U4/U6-U5 tri-snRNP complex. Component of some MLL1/MLL complex.

The protein resides in the nucleus. It localises to the nucleus speckle. Its subcellular location is the cajal body. In terms of biological role, involved in pre-mRNA splicing as component of the spliceosome. Required for the assembly of the U4/U5/U6 tri-snRNP complex, one of the building blocks of the spliceosome. The chain is U4/U6 small nuclear ribonucleoprotein Prp31 (prpf31) from Xenopus laevis (African clawed frog).